The sequence spans 307 residues: Lipoyl synthase (307 aa).

Residues C55, C60, C66, C81, C85, C88, and S292 each contribute to the [4Fe-4S] cluster site. Residues 67–281 enclose the Radical SAM core domain; sequence WEDREATFLI…ARHAEELGFS (215 aa).

It belongs to the radical SAM superfamily. Lipoyl synthase family. Requires [4Fe-4S] cluster as cofactor.

The protein resides in the cytoplasm. The enzyme catalyses [[Fe-S] cluster scaffold protein carrying a second [4Fe-4S](2+) cluster] + N(6)-octanoyl-L-lysyl-[protein] + 2 oxidized [2Fe-2S]-[ferredoxin] + 2 S-adenosyl-L-methionine + 4 H(+) = [[Fe-S] cluster scaffold protein] + N(6)-[(R)-dihydrolipoyl]-L-lysyl-[protein] + 4 Fe(3+) + 2 hydrogen sulfide + 2 5'-deoxyadenosine + 2 L-methionine + 2 reduced [2Fe-2S]-[ferredoxin]. It functions in the pathway protein modification; protein lipoylation via endogenous pathway; protein N(6)-(lipoyl)lysine from octanoyl-[acyl-carrier-protein]: step 2/2. In terms of biological role, catalyzes the radical-mediated insertion of two sulfur atoms into the C-6 and C-8 positions of the octanoyl moiety bound to the lipoyl domains of lipoate-dependent enzymes, thereby converting the octanoylated domains into lipoylated derivatives. The chain is Lipoyl synthase from Mycobacterium avium (strain 104).